We begin with the raw amino-acid sequence, 424 residues long: Serine--tRNA ligase (424 aa).

Position 230–232 (230–232) interacts with L-serine; the sequence is TSE. ATP contacts are provided by residues 261 to 263 and Val277; that span reads RKE. Residue Glu284 coordinates L-serine. Position 348–351 (348–351) interacts with ATP; it reads ELTS. L-serine is bound at residue Thr382.

It belongs to the class-II aminoacyl-tRNA synthetase family. Type-1 seryl-tRNA synthetase subfamily. Homodimer. The tRNA molecule binds across the dimer.

The protein localises to the cytoplasm. It catalyses the reaction tRNA(Ser) + L-serine + ATP = L-seryl-tRNA(Ser) + AMP + diphosphate + H(+). It carries out the reaction tRNA(Sec) + L-serine + ATP = L-seryl-tRNA(Sec) + AMP + diphosphate + H(+). It participates in aminoacyl-tRNA biosynthesis; selenocysteinyl-tRNA(Sec) biosynthesis; L-seryl-tRNA(Sec) from L-serine and tRNA(Sec): step 1/1. Functionally, catalyzes the attachment of serine to tRNA(Ser). Is also able to aminoacylate tRNA(Sec) with serine, to form the misacylated tRNA L-seryl-tRNA(Sec), which will be further converted into selenocysteinyl-tRNA(Sec). This chain is Serine--tRNA ligase, found in Nocardioides sp. (strain ATCC BAA-499 / JS614).